Reading from the N-terminus, the 1003-residue chain is Methyl-CpG-binding domain protein 6 (1003 aa).

In terms of domain architecture, MBD spans 11–81; the sequence is DRAGGPVATS…KVFNFDPLAP (71 aa). Positions 57-68 are required for interaction with ASXL1/2/3; the sequence is DGTCKCGLECPL. Disordered stretches follow at residues 120 to 219, 238 to 664, and 683 to 1003; these read TCSH…PPPA, VPSD…PLLF, and ATLD…KLAP. 2 stretches are compositionally biased toward pro residues: residues 140–155 and 268–287; these read PGPPSARPPCRVPPTT and TPPPLPPSNNLPAHPGPASQ. Low complexity-rich tracts occupy residues 297 to 308, 319 to 328, and 348 to 361; these read LPLVLGPLGGAP, LASSLLSAAA, and AQAPSASHSSSLRP. A compositionally biased stretch (pro residues) spans 391–407; the sequence is APAPVPQPFSLPEPSQP. Positions 408–426 are enriched in low complexity; the sequence is ILPSVLSLLGLPTPGPSHS. A compositionally biased stretch (pro residues) spans 439 to 456; sequence LPPPPTLSSGSPPQPRHP. 2 stretches are compositionally biased toward low complexity: residues 460 to 498 and 531 to 548; these read SLPGTTSGSLSSVPGAPAPPAASKAPVVPSPVLQSPSEG and GAGFPGMLGALPLPLSLG. A compositionally biased stretch (pro residues) spans 570 to 589; sequence QPPPEPLLPPPGGPGPPLAP. Residues 590 to 602 show a composition bias toward low complexity; sequence GEPEGPSLLVASL. Positions 603 to 617 are enriched in pro residues; that stretch reads LPPPPSDLLPPPSAP. A compositionally biased stretch (low complexity) spans 618–633; the sequence is PSNLLASFLPLLALGP. Gly residues predominate over residues 635–649; it reads AGDGEGSAEGAGGPS. Positions 650 to 662 are enriched in low complexity; sequence GEPFSGLGDLSPL. Residues 707 to 718 are compositionally biased toward polar residues; sequence TSSVTTATTDPG. Low complexity-rich tracts occupy residues 732–761, 768–778, and 788–798; these read PPQLLSPLLGASLLGDLSSLTSSPGALPSL, LLSGQLGLQLL, and SEASSPLACLL. Over residues 805–817 the composition is skewed to pro residues; that stretch reads PEQPEAPCLPPES. Residues 818–837 are compositionally biased toward low complexity; it reads PASALEPEPARPPLSALAPP. The span at 947–958 shows a compositional bias: basic residues; that stretch reads RKSRRGRRRKYN. Polar residues predominate over residues 959-969; sequence PTRNSNSSRQD. A compositionally biased stretch (basic residues) spans 989–1003; sequence RPGRPAKNKRRKLAP.

As to quaternary structure, core component of the polycomb repressive deubiquitinase (PR-DUB) complex, at least composed of BAP1, one of ASXL1, ASXL2 or (probably) ASXL3, and one of MBD5 or MBD6. Distinct combinations of ASXL and MBD proteins may preferentially bind specific histone modification marks. The PR-DUB core associates with a number of accessory proteins, including FOXK1, FOXK2, KDM1B, HCFC1 and OGT; KDM1B specifically associates with ASXL2 PR-DUB complexes. Interacts (via MBD domain) with ASXL1, ASXL2 and ASXL3 (via PHD domain); the interaction is probably direct, mediates association with other PR-DUB complex core components.

Its subcellular location is the nucleus. The protein resides in the chromosome. Its function is as follows. Non-catalytic component of the polycomb repressive deubiquitinase (PR-DUB) complex, a complex that specifically mediates deubiquitination of histone H2A monoubiquitinated at 'Lys-120' (H2AK119ub1). Important for stability of PR-DUB components and stimulating its ubiquitinase activity. As part of the PR-DUB complex, associates with chromatin enriched in histone marks H3K4me1, H3K4me3, and H3K27Ac, but not in H3K27me3. MBD5 and MBD6 containing complexes associate with distinct chromatin regions enriched in genes involved in different pathways. Heterochromatin recruitment is not mediated by DNA methylation. The PR-DUB complex is an epigenetic regulator of gene expression, including genes involved in development, cell communication, signaling, cell proliferation and cell viability; may promote cancer cell growth. This is Methyl-CpG-binding domain protein 6 (MBD6) from Homo sapiens (Human).